Consider the following 288-residue polypeptide: Lipoyl synthase (288 aa).

C39, C44, C50, C65, C69, C72, and S276 together coordinate [4Fe-4S] cluster. Residues 51–265 (WGKGTATFMI…KETGLKKGFE (215 aa)) form the Radical SAM core domain.

This sequence belongs to the radical SAM superfamily. Lipoyl synthase family. Requires [4Fe-4S] cluster as cofactor.

The protein localises to the cytoplasm. It carries out the reaction [[Fe-S] cluster scaffold protein carrying a second [4Fe-4S](2+) cluster] + N(6)-octanoyl-L-lysyl-[protein] + 2 oxidized [2Fe-2S]-[ferredoxin] + 2 S-adenosyl-L-methionine + 4 H(+) = [[Fe-S] cluster scaffold protein] + N(6)-[(R)-dihydrolipoyl]-L-lysyl-[protein] + 4 Fe(3+) + 2 hydrogen sulfide + 2 5'-deoxyadenosine + 2 L-methionine + 2 reduced [2Fe-2S]-[ferredoxin]. It functions in the pathway protein modification; protein lipoylation via endogenous pathway; protein N(6)-(lipoyl)lysine from octanoyl-[acyl-carrier-protein]: step 2/2. In terms of biological role, catalyzes the radical-mediated insertion of two sulfur atoms into the C-6 and C-8 positions of the octanoyl moiety bound to the lipoyl domains of lipoate-dependent enzymes, thereby converting the octanoylated domains into lipoylated derivatives. The protein is Lipoyl synthase of Bacteroides fragilis (strain YCH46).